We begin with the raw amino-acid sequence, 524 residues long: GMP synthase [glutamine-hydrolyzing] (524 aa).

In terms of domain architecture, Glutamine amidotransferase type-1 spans 7–196; it reads PVLVVDFGAQ…LHELAGIPAS (190 aa). C84 (nucleophile) is an active-site residue. Residues H170 and E172 contribute to the active site. A GMPS ATP-PPase domain is found at 197-398; it reads WTPSNIADVL…LGLPEEIVAR (202 aa). 224 to 230 is an ATP binding site; sequence SGGVDSA.

As to quaternary structure, homodimer.

It catalyses the reaction XMP + L-glutamine + ATP + H2O = GMP + L-glutamate + AMP + diphosphate + 2 H(+). Its pathway is purine metabolism; GMP biosynthesis; GMP from XMP (L-Gln route): step 1/1. In terms of biological role, catalyzes the synthesis of GMP from XMP. In Nocardia farcinica (strain IFM 10152), this protein is GMP synthase [glutamine-hydrolyzing].